A 152-amino-acid polypeptide reads, in one-letter code: Large ribosomal subunit protein uL13 (152 aa).

Residues Glu129–Ser152 are disordered.

It belongs to the universal ribosomal protein uL13 family. In terms of assembly, part of the 50S ribosomal subunit.

In terms of biological role, this protein is one of the early assembly proteins of the 50S ribosomal subunit, although it is not seen to bind rRNA by itself. It is important during the early stages of 50S assembly. This chain is Large ribosomal subunit protein uL13, found in Ruegeria sp. (strain TM1040) (Silicibacter sp.).